Reading from the N-terminus, the 707-residue chain is Elongation factor G 2 (707 aa).

In terms of domain architecture, tr-type G spans 8-290 (ERYRNIGISA…AVIDYLPSPA (283 aa)). GTP contacts are provided by residues 17 to 24 (AHIDAGKT), 88 to 92 (DTPGH), and 142 to 145 (NKMD).

The protein belongs to the TRAFAC class translation factor GTPase superfamily. Classic translation factor GTPase family. EF-G/EF-2 subfamily.

The protein localises to the cytoplasm. In terms of biological role, catalyzes the GTP-dependent ribosomal translocation step during translation elongation. During this step, the ribosome changes from the pre-translocational (PRE) to the post-translocational (POST) state as the newly formed A-site-bound peptidyl-tRNA and P-site-bound deacylated tRNA move to the P and E sites, respectively. Catalyzes the coordinated movement of the two tRNA molecules, the mRNA and conformational changes in the ribosome. The protein is Elongation factor G 2 of Bordetella bronchiseptica (strain ATCC BAA-588 / NCTC 13252 / RB50) (Alcaligenes bronchisepticus).